We begin with the raw amino-acid sequence, 316 residues long: Deoxyribonuclease-1-like 1 (316 aa).

The first 28 residues, 1–28 (MHSSGGFQKAIHGHALLLLLLLASGAET), serve as a signal peptide directing secretion. Catalysis depends on residues Glu-107 and His-158. Cys-197 and Cys-234 are disulfide-bonded. Residue Asn-271 is glycosylated (N-linked (GlcNAc...) asparagine).

The protein belongs to the DNase I family.

The protein localises to the endoplasmic reticulum. The polypeptide is Deoxyribonuclease-1-like 1 (DNASE1L1) (Bos taurus (Bovine)).